The primary structure comprises 286 residues: ATP synthase gamma chain (286 aa).

Belongs to the ATPase gamma chain family. As to quaternary structure, F-type ATPases have 2 components, CF(1) - the catalytic core - and CF(0) - the membrane proton channel. CF(1) has five subunits: alpha(3), beta(3), gamma(1), delta(1), epsilon(1). CF(0) has three main subunits: a, b and c.

The protein resides in the cell inner membrane. In terms of biological role, produces ATP from ADP in the presence of a proton gradient across the membrane. The gamma chain is believed to be important in regulating ATPase activity and the flow of protons through the CF(0) complex. The sequence is that of ATP synthase gamma chain from Alteromonas mediterranea (strain DSM 17117 / CIP 110805 / LMG 28347 / Deep ecotype).